The following is a 188-amino-acid chain: MIFKDYDFLQNYDLKNFEEKVKIYKELLSKFNRIHNLTHLKNIDENIFDSIKILDFYDFSKAKNIADIGSGAGFPAVFLAFLLQSNFHLFEPNPKKAAFLRTLKIECELPNLHIYKEKVQEYKNTFKADIITSRALMDVKPLLEICKNLKDENTVFILWKGSEIYQELENIKDYEIFENNLRRYCILK.

S-adenosyl-L-methionine contacts are provided by residues G69, F74, 119 to 120 (VQ), and R134.

Belongs to the methyltransferase superfamily. RNA methyltransferase RsmG family.

Its subcellular location is the cytoplasm. It carries out the reaction guanosine(527) in 16S rRNA + S-adenosyl-L-methionine = N(7)-methylguanosine(527) in 16S rRNA + S-adenosyl-L-homocysteine. In terms of biological role, specifically methylates the N7 position of guanine in position 527 of 16S rRNA. This Campylobacter jejuni subsp. jejuni serotype O:23/36 (strain 81-176) protein is Ribosomal RNA small subunit methyltransferase G.